Reading from the N-terminus, the 711-residue chain is C-Jun-amino-terminal kinase-interacting protein 1 (711 aa).

Residues 1 to 27 (MAERESGGLGGGAASPPAASPFLGLHI) are disordered. The segment covering 14–25 (ASPPAASPFLGL) has biased composition (low complexity). A phosphoserine mark is found at Ser15, Ser29, and Ser40. A disordered region spans residues 78-371 (AGGGGAGSRL…PPRASLSSDT (294 aa)). Residue Thr103 is modified to Phosphothreonine; by MAPK8, MAPK9 and MAPK10. The span at 105 to 116 (GAEDDEEDDDEE) shows a compositional bias: acidic residues. Residues 127-285 (PKAESGQEPA…EATEEIYLTP (159 aa)) form a JNK-binding domain (JBD) region. The span at 139 to 149 (GQGQSQGQSQG) shows a compositional bias: low complexity. The residue at position 152 (Ser152) is a Phosphoserine. The segment at 157 to 176 (RPKRPTTLNLFPQVPRSQDT) is minimal inhibitory domain (MID). Over residues 162–182 (TTLNLFPQVPRSQDTLNNNSL) the composition is skewed to polar residues. Phosphoserine occurs at positions 181, 187, 193, 195, and 196. Residues 194–204 (RSSSPLKTGEQ) are compositionally biased toward polar residues. Thr205 carries the phosphothreonine; by MAPK8, MAPK9 and MAPK10 modification. Ser214 carries the post-translational modification Phosphoserine. Residues 228–244 (DRGTSTDSPCRRSTATQ) are compositionally biased toward polar residues. Positions 267–277 (IHYQADVRLEA) are enriched in basic and acidic residues. The tract at residues 283–471 (LTPVQRPPDA…NVFMSGRSRS (189 aa)) is interaction with MAP3K7. 9 positions are modified to phosphoserine: Ser311, Ser328, Ser330, Ser340, Ser355, Ser366, Ser369, Ser407, and Ser409. 2 short sequence motifs (D-box) span residues 353–360 (RGSLGEPP) and 364–372 (RASLSSDTS). Thr411 is modified (phosphothreonine). The interval 429–451 (EEYEEAPRPQPPACLSEDSTPDE) is disordered. Ser444 and Ser447 each carry phosphoserine. Thr448 bears the Phosphothreonine mark. Phosphoserine is present on residues Ser469, Ser471, Ser472, and Ser473. Residues 471–660 (SSSAESFGLF…PKNNKYFGFI (190 aa)) are interaction with VRK2. Residues 488-549 (EQEQTHRAIF…PAYYAIEVTK (62 aa)) form the SH3 domain. The PID domain maps to 561–700 (SDWVDQFRVK…FQQFYKQFVE (140 aa)).

The protein belongs to the JIP scaffold family. As to quaternary structure, forms homo- or heterooligomeric complexes. Binds specific components of the JNK signaling pathway namely, MAPK8/JNK1, MAPK9/JNK2, MAPK10/JNK3, MAP2K7/MKK7, MAP3K11/MLK3 and DLK1. Also binds the proline-rich domain-containing splice variant of apolipoprotein E receptor 2 (ApoER2). Interacts, via the PID domain, with ARHGEF28. Binds the cytoplasmic tails of LRP1 and LRP2 (Megalin). Binds the TPR motif-containing C-terminal of KNS2, then the pre-assembled MAPK8IP1 scaffolding complexes are transported as a cargo of kinesin, to the required subcellular location. Interacts with the cytoplasmic domain of APP. Interacts with DCLK2. Interacts with MAP3K7/TAK1. Interacts with isoform 1 and isoform 2 of VRK2. Found in a complex with SH3RF1, RAC1, MAP3K11/MLK3, MAP2K7/MKK7 and MAPK8/JNK1. Found in a complex with SH3RF1, RAC2, MAP3K7/TAK1, MAP2K7/MKK7, MAPK8/JNK1 and MAPK9/JNK2. Interacts with SH3RF2. Phosphorylated by MAPK8, MAPK9 and MAPK10. Phosphorylation on Thr-103 is also necessary for the dissociation and activation of MAP3K12. Phosphorylated by isoform 1 and isoform 2 of VRK2. Hyperphosphorylated during mitosis following activation of stress-activated and MAP kinases. Post-translationally, ubiquitinated. Two preliminary events are required to prime for ubiquitination; phosphorylation and an increased in intracellular calcium concentration. Then, the calcium influx initiates ubiquitination and degradation by the ubiquitin-proteasome pathway. Highly expressed in brain. Expressed in neurons, localizing to neurite tips in differentiating cells. Also expressed in the pancreas, testis and prostate. Low levels in heart, ovary and small intestine. Decreased levels in pancreatic beta cells sensitize cells to IL-1-beta-induced apoptosis.

Its subcellular location is the cytoplasm. The protein localises to the perinuclear region. It is found in the nucleus. The protein resides in the endoplasmic reticulum membrane. It localises to the mitochondrion membrane. Its function is as follows. The JNK-interacting protein (JIP) group of scaffold proteins selectively mediates JNK signaling by aggregating specific components of the MAPK cascade to form a functional JNK signaling module. Required for JNK activation in response to excitotoxic stress. Cytoplasmic MAPK8IP1 causes inhibition of JNK-regulated activity by retaining JNK in the cytoplasm and inhibiting JNK phosphorylation of c-Jun. May also participate in ApoER2-specific reelin signaling. Directly, or indirectly, regulates GLUT2 gene expression and beta-cell function. Appears to have a role in cell signaling in mature and developing nerve terminals. May function as a regulator of vesicle transport, through interactions with the JNK-signaling components and motor proteins. Functions as an anti-apoptotic protein and whose level seems to influence the beta-cell death or survival response. Acts as a scaffold protein that coordinates with SH3RF1 in organizing different components of the JNK pathway, including RAC1 or RAC2, MAP3K11/MLK3 or MAP3K7/TAK1, MAP2K7/MKK7, MAPK8/JNK1 and/or MAPK9/JNK2 into a functional multiprotein complex to ensure the effective activation of the JNK signaling pathway. Regulates the activation of MAPK8/JNK1 and differentiation of CD8(+) T-cells. The chain is C-Jun-amino-terminal kinase-interacting protein 1 (MAPK8IP1) from Homo sapiens (Human).